The following is a 471-amino-acid chain: ATP synthase subunit beta, chloroplastic (471 aa).

An ATP-binding site is contributed by 151–158; it reads GGAGVGKT.

It belongs to the ATPase alpha/beta chains family. As to quaternary structure, F-type ATPases have 2 components, CF(1) - the catalytic core - and CF(0) - the membrane proton channel. CF(1) has five subunits: alpha(3), beta(3), gamma(1), delta(1), epsilon(1). CF(0) has four main subunits: a(1), b(1), b'(1) and c(9-12).

The protein resides in the plastid. It is found in the chloroplast thylakoid membrane. The enzyme catalyses ATP + H2O + 4 H(+)(in) = ADP + phosphate + 5 H(+)(out). Produces ATP from ADP in the presence of a proton gradient across the membrane. The catalytic sites are hosted primarily by the beta subunits. This is ATP synthase subunit beta, chloroplastic from Rhodomonas salina (Cryptomonas salina).